A 561-amino-acid chain; its full sequence is Oxygen-dependent choline dehydrogenase (561 aa).

6–35 (DYIIIGAGSAGNVLATRLTEDADVSVLLLE) provides a ligand contact to FAD. H475 serves as the catalytic Proton acceptor.

The protein belongs to the GMC oxidoreductase family. FAD is required as a cofactor.

It catalyses the reaction choline + A = betaine aldehyde + AH2. The catalysed reaction is betaine aldehyde + NAD(+) + H2O = glycine betaine + NADH + 2 H(+). Its pathway is amine and polyamine biosynthesis; betaine biosynthesis via choline pathway; betaine aldehyde from choline (cytochrome c reductase route): step 1/1. In terms of biological role, involved in the biosynthesis of the osmoprotectant glycine betaine. Catalyzes the oxidation of choline to betaine aldehyde and betaine aldehyde to glycine betaine at the same rate. In Pseudomonas aeruginosa (strain LESB58), this protein is Oxygen-dependent choline dehydrogenase.